A 239-amino-acid chain; its full sequence is Myogenic factor 6 (239 aa).

Positions 28-59 (PGVSPLYEGNDSPLSPGQDPVPSETGCESSGE) are disordered. Positions 92 to 143 (DRRKAATLRERRRLKKINEAFDALKKKTVPNPNQRLPKVEILRSAINYIEKL) constitute a bHLH domain. Residues 182-196 (CQSWQENPDHSSSQM) are compositionally biased toward polar residues. Residues 182-239 (CQSWQENPDHSSSQMAGHREGAVLESSESSSLRRLSSIVDSISTEEPKARCPSQISEK) form a disordered region. A compositionally biased stretch (low complexity) spans 204–223 (VLESSESSSLRRLSSIVDSI).

In terms of assembly, efficient DNA binding requires dimerization with another bHLH protein.

It is found in the nucleus. Involved in muscle differentiation (myogenic factor). Induces fibroblasts to differentiate into myoblasts. Probable sequence specific DNA-binding protein. The polypeptide is Myogenic factor 6 (myf6) (Danio rerio (Zebrafish)).